The chain runs to 219 residues: Non-specific lipid transfer protein GPI-anchored 25 (219 aa).

An N-terminal signal peptide occupies residues 1–22 (MATKITGVFILILTITFSSSSA). 4 disulfides stabilise this stretch: Cys-39-Cys-85, Cys-49-Cys-68, Cys-69-Cys-110, and Cys-83-Cys-123. The N-linked (GlcNAc...) asparagine glycan is linked to Asn-59. N-linked (GlcNAc...) asparagine glycosylation is present at Asn-148. The disordered stretch occupies residues 152 to 181 (SPQSVDLAPEVSPSSDLFSPETATLAPPPP). A lipid anchor (GPI-anchor amidated serine) is attached at Ser-192. Positions 193–219 (SDSLKIRNFWFPSTIIMTFATSILARI) are cleaved as a propeptide — removed in mature form.

The protein belongs to the plant LTP family.

It localises to the cell membrane. In terms of biological role, probable lipid transfer protein. The chain is Non-specific lipid transfer protein GPI-anchored 25 from Arabidopsis thaliana (Mouse-ear cress).